A 103-amino-acid chain; its full sequence is Putative membrane protein insertion efficiency factor (103 aa).

It belongs to the UPF0161 family.

The protein localises to the cell membrane. Functionally, could be involved in insertion of integral membrane proteins into the membrane. This is Putative membrane protein insertion efficiency factor from Clavibacter michiganensis subsp. michiganensis (strain NCPPB 382).